The sequence spans 686 residues: WD repeat-containing protein 93 (686 aa).

The span at 1–10 shows a compositional bias: polar residues; that stretch reads MSFPRGSQTQ. The tract at residues 1–40 is disordered; that stretch reads MSFPRGSQTQKIKHPIGTRKGPLEVPPPTEKDWPKDDEQD. Basic and acidic residues predominate over residues 29-40; the sequence is TEKDWPKDDEQD. Residues 410–449 form a WD repeat; that stretch reads PCAAPIAVSQLSCSSSYLVLACEDGVLTLWDLAKGFPLGV.

The polypeptide is WD repeat-containing protein 93 (WDR93) (Homo sapiens (Human)).